The chain runs to 97 residues: Serine protease inhibitor Kazal-type 14 (97 aa).

The N-terminal stretch at 1–21 is a signal peptide; sequence MAKSFPVFSLLSFILIHLVLS. The 64-residue stretch at 34–97 folds into the Kazal-like domain; the sequence is GIIKVKCPYE…RIRFYHDGKC (64 aa). Intrachain disulfides connect Cys40–Cys79, Cys57–Cys76, and Cys65–Cys97. N-linked (GlcNAc...) asparagine glycosylation is present at Asn51.

The protein resides in the secreted. In terms of biological role, may be a serine protease inhibitor. The sequence is that of Serine protease inhibitor Kazal-type 14 (SPINK14) from Homo sapiens (Human).